We begin with the raw amino-acid sequence, 360 residues long: Phospho-N-acetylmuramoyl-pentapeptide-transferase (360 aa).

Transmembrane regions (helical) follow at residues 26-46, 72-92, 94-114, 132-152, 168-188, 199-219, 236-256, 263-283, 288-308, and 338-358; these read AIVS…RMIA, PTMG…LWAY, SNPY…IGFV, WKYF…YLAG, VMPQ…VGTG, GLAI…AWAT, AGEL…FLWF, VFMG…IAVL, FLLV…ILQV, and VIVR…ATLK.

Belongs to the glycosyltransferase 4 family. MraY subfamily. It depends on Mg(2+) as a cofactor.

It is found in the cell inner membrane. The catalysed reaction is UDP-N-acetyl-alpha-D-muramoyl-L-alanyl-gamma-D-glutamyl-meso-2,6-diaminopimeloyl-D-alanyl-D-alanine + di-trans,octa-cis-undecaprenyl phosphate = di-trans,octa-cis-undecaprenyl diphospho-N-acetyl-alpha-D-muramoyl-L-alanyl-D-glutamyl-meso-2,6-diaminopimeloyl-D-alanyl-D-alanine + UMP. It functions in the pathway cell wall biogenesis; peptidoglycan biosynthesis. Functionally, catalyzes the initial step of the lipid cycle reactions in the biosynthesis of the cell wall peptidoglycan: transfers peptidoglycan precursor phospho-MurNAc-pentapeptide from UDP-MurNAc-pentapeptide onto the lipid carrier undecaprenyl phosphate, yielding undecaprenyl-pyrophosphoryl-MurNAc-pentapeptide, known as lipid I. This chain is Phospho-N-acetylmuramoyl-pentapeptide-transferase, found in Enterobacter sp. (strain 638).